Reading from the N-terminus, the 448-residue chain is MPGLKRILTVTILALWLPHPGNAQQQCTNGFDLDRQTGQCLDIDECRTIPEACRGDMMCVNQNGGYLCIPRTNPVYRGPYSNPYSTSYSGPYPAAAPPVPASNYPTISRPLVCRFGYQMDEGNQCVDVDECATDSHQCNPTQICINTEGGYTCSCTDGYWLLEGQCLDIDECRYGYCQQLCANVPGSYSCTCNPGFTLNDDGRSCQDVNECETENPCVQTCVNTYGSFICRCDPGYELEEDGIHCSDMDECSFSEFLCQHECVNQPGSYFCSCPPGYVLLEDNRSCQDINECEHRNHTCTPLQTCYNLQGGFKCIDPIVCEEPYLLIGDNRCMCPAENTGCRDQPFTILFRDMDVVSGRSVPADIFQMQATTRYPGAYYIFQIKSGNEGREFYMRQTGPISATLVMTRPIKGPRDIQLDLEMITVNTVINFRGSSVIRLRIYVSQYPF.

A signal peptide spans Met-1–Ala-23. Residues Asp-42–Asn-82 enclose the EGF-like 1; calcium-binding domain. 17 cysteine pairs are disulfide-bonded: Cys-46–Cys-59, Cys-53–Cys-68, Cys-131–Cys-144, Cys-138–Cys-153, Cys-155–Cys-166, Cys-172–Cys-181, Cys-177–Cys-190, Cys-192–Cys-205, Cys-211–Cys-221, Cys-217–Cys-230, Cys-232–Cys-245, Cys-251–Cys-262, Cys-258–Cys-271, Cys-273–Cys-286, Cys-292–Cys-305, Cys-299–Cys-314, and Cys-320–Cys-332. Positions Arg-54–Asp-56 match the Cell attachment site motif. Residues Asp-127 to Leu-167 enclose the EGF-like 2; calcium-binding domain. One can recognise an EGF-like 3; calcium-binding domain in the interval Asp-168–Gln-206. One can recognise an EGF-like 4; calcium-binding domain in the interval Asp-207 to Ser-246. The interval Cys-245 to Phe-448 is interaction with LOXL1. Residues Asp-247–Gln-287 enclose the EGF-like 5; calcium-binding domain. N-linked (GlcNAc...) asparagine glycosylation is found at Asn-283 and Asn-296. Residues Asp-288–Met-333 form the EGF-like 6; calcium-binding domain.

Belongs to the fibulin family. Homodimer. Monomer, homodimerizes in presence of Ca(2+). Interacts with ELN. Interacts (via N-terminus) with the integrins ITGAV/ITGB3, ITGAV/ITGB5 and ITGA9/ITGB1. Interacts with FBN1 (via N-terminal domain). Forms a ternary complex with ELN and FBN1. Interacts with EFEMP2 with moderate affinity. Interacts with LOXL1. Post-translationally, N-glycosylated.

It localises to the secreted. It is found in the extracellular space. Its subcellular location is the extracellular matrix. In terms of biological role, essential for elastic fiber formation, is involved in the assembly of continuous elastin (ELN) polymer and promotes the interaction of microfibrils and ELN. Stabilizes and organizes elastic fibers in the skin, lung and vasculature. Promotes adhesion of endothelial cells through interaction of integrins and the RGD motif. Vascular ligand for integrin receptors which may play a role in vascular development and remodeling. May act as an adapter that mediates the interaction between FBN1 and ELN. In Rattus norvegicus (Rat), this protein is Fibulin-5 (Fbln5).